The sequence spans 335 residues: UPF0353 protein MAP_1207 (335 aa).

The next 2 membrane-spanning stretches (helical) occupy residues 18–38 (WFFLFLLVVAGLAALYILMQL) and 67–87 (LPAILLVASLVLFTIAMAGPT). The region spanning 98–294 (VVMLVIDVSQ…QELKSVYATL (197 aa)) is the VWFA domain. The chain crosses the membrane as a helical span at residues 309–329 (VGWVRLGALVLALAALTALLI).

This sequence belongs to the UPF0353 family.

It localises to the cell membrane. In Mycolicibacterium paratuberculosis (strain ATCC BAA-968 / K-10) (Mycobacterium paratuberculosis), this protein is UPF0353 protein MAP_1207.